The following is a 195-amino-acid chain: MSAARPQFSIDDAFELSLEDGGPGPESSGVARFGPLHFERRARFEVADEDKQSRLRYQNLENDEDGAQASPEPDGGVGTRDSSRTSIRSSQWSFSTISSSTQRSYNTCCSWTQHPLIQKNRRVVLASFLLLLLGLVLILVGVGLEATPSPGVSSAIFFVPGFLLLVPGVYHVIFIYCAVKGHRGFQFFYLPYFEK.

Disordered stretches follow at residues 1 to 33 (MSAA…VARF) and 48 to 88 (DEDK…TSIR). Over 1–122 (MSAARPQFSI…QHPLIQKNRR (122 aa)) the chain is Cytoplasmic. At S93 the chain carries Phosphoserine. The helical transmembrane segment at 123–143 (VVLASFLLLLLGLVLILVGVG) threads the bilayer. Over 144–154 (LEATPSPGVSS) the chain is Extracellular. Residues 155 to 175 (AIFFVPGFLLLVPGVYHVIFI) form a helical membrane-spanning segment. Topologically, residues 176 to 195 (YCAVKGHRGFQFFYLPYFEK) are cytoplasmic.

The protein belongs to the TMEM134/TMEM230 family. As to quaternary structure, (Microbial infection) Interacts with Hepatitis E virus (HEV) ORF2.

The protein localises to the membrane. Its subcellular location is the cytoplasm. The protein resides in the perinuclear region. The polypeptide is Transmembrane protein 134 (TMEM134) (Homo sapiens (Human)).